Reading from the N-terminus, the 27-residue chain is Cupiennin-4b (27 aa).

Residue Gln-27 is modified to Glutamine amide.

In terms of tissue distribution, expressed by the venom gland.

Its subcellular location is the secreted. The protein is Cupiennin-4b of Cupiennius salei (American wandering spider).